A 236-amino-acid polypeptide reads, in one-letter code: Eukaryotic translation initiation factor 3 subunit J (236 aa).

Positions Met1 to Arg84 are disordered. The segment covering Gly28 to Lys46 has biased composition (acidic residues). Composition is skewed to basic and acidic residues over residues Asp47–Ala58 and Ala68–Glu77.

It belongs to the eIF-3 subunit J family. In terms of assembly, component of the eukaryotic translation initiation factor 3 (eIF-3) complex. The eIF-3 complex interacts with pix.

It localises to the cytoplasm. Functionally, component of the eukaryotic translation initiation factor 3 (eIF-3) complex, which is involved in protein synthesis of a specialized repertoire of mRNAs and, together with other initiation factors, stimulates binding of mRNA and methionyl-tRNAi to the 40S ribosome. The eIF-3 complex specifically targets and initiates translation of a subset of mRNAs involved in cell proliferation. The protein is Eukaryotic translation initiation factor 3 subunit J of Drosophila yakuba (Fruit fly).